A 542-amino-acid polypeptide reads, in one-letter code: Homeobox protein ceh-18 (542 aa).

Polar residues predominate over residues 243–252 (NTPTQPTASL). Residues 243-264 (NTPTQPTASLTPKKAENRPPVV) are disordered. Positions 290-364 (DDRIDMNELE…LLKEWLADVE (75 aa)) constitute a POU-specific domain. Residues 421–480 (RRRKRTNLDMNQRNALDTFFALNPRPDHDKMTDIANSLELDRDVVRVWFCNRRQKMRRVD) constitute a DNA-binding region (homeobox). A disordered region spans residues 514-542 (LASCQASNDDSDGTSGSPDAPSNDGCSDL). Positions 517 to 530 (CQASNDDSDGTSGS) are enriched in polar residues.

Belongs to the POU transcription factor family. Interacts with akir-1. In terms of tissue distribution, expressed in the gonadal sheath cells that signal the oocyte, but not in the oocyte.

The protein localises to the nucleus. Directs gonadal sheath cell differentiation and function. Also directs gonad migration and plays a role in specifying the differentiated phenotypes of epidermal cells during postembryonic development. Plays a role in oogenesis, regulating a sheath cell signal that causes oocytes to maintain diakinesis arrest during meiosis. Negatively regulates oocyte maturation, ovulation and MAPK activation in oocytes when sperm are not available for fertilization. May be recruited by akir-1 to the promoter regions of antimicrobial peptide genes to control gene expression in response to fungal infection. This Caenorhabditis elegans protein is Homeobox protein ceh-18.